A 445-amino-acid polypeptide reads, in one-letter code: Probable aminotransferase TAT3 (445 aa).

Belongs to the class-I pyridoxal-phosphate-dependent aminotransferase family. The cofactor is pyridoxal 5'-phosphate. Expressed in roots, leaves and cauline leaves.

The sequence is that of Probable aminotransferase TAT3 (TAT3) from Arabidopsis thaliana (Mouse-ear cress).